We begin with the raw amino-acid sequence, 371 residues long: MQQKCYYEILNISKTASGVEIKRAYRKLAMKYHPDRNPGDKEAEIKFKEISEAYEILSDDSKRSRYDQFGHAGVNQQSGFGGTGGFEDIFDTFFGGGTSRGSNRSRASRGSDLEYTLEITLEEAFFGVEKEITIPRMESCDSCDGTGSKSRSKTTCHACHGQGTIRRQQGFFAFEQTCPVCNGTGYSITDPCDACYGNGKVKKQKTLKVKIPEGVDNGDRIRLQGEGDSGSNGAMNGDLYVQIIIKEHKIFERRDINLYCEMPISFTKACLGGDIKVPTLDGEVVLKVVPETQTGKVFRLREKGMKSLRGHRRGDLLCKVVVETPVNLSAEQKELLEKFADSLGEDYQSKHAPKSKTWFDNVKDYAKKFFE.

One can recognise a J domain in the interval 5 to 70 (CYYEILNISK…SKRSRYDQFG (66 aa)). A CR-type zinc finger spans residues 127-204 (GVEKEITIPR…CYGNGKVKKQ (78 aa)). Zn(2+) contacts are provided by C140, C143, C156, C159, C178, C181, C192, and C195. CXXCXGXG motif repeat units lie at residues 140-147 (CDSCDGTG), 156-163 (CHACHGQG), 178-185 (CPVCNGTG), and 192-199 (CDACYGNG).

Belongs to the DnaJ family. In terms of assembly, homodimer. It depends on Zn(2+) as a cofactor.

It localises to the cytoplasm. In terms of biological role, participates actively in the response to hyperosmotic and heat shock by preventing the aggregation of stress-denatured proteins and by disaggregating proteins, also in an autonomous, DnaK-independent fashion. Unfolded proteins bind initially to DnaJ; upon interaction with the DnaJ-bound protein, DnaK hydrolyzes its bound ATP, resulting in the formation of a stable complex. GrpE releases ADP from DnaK; ATP binding to DnaK triggers the release of the substrate protein, thus completing the reaction cycle. Several rounds of ATP-dependent interactions between DnaJ, DnaK and GrpE are required for fully efficient folding. Also involved, together with DnaK and GrpE, in the DNA replication of plasmids through activation of initiation proteins. In Francisella tularensis subsp. holarctica (strain LVS), this protein is Chaperone protein DnaJ.